Consider the following 249-residue polypeptide: 2,3-bisphosphoglycerate-dependent phosphoglycerate mutase (249 aa).

Residues 11–18, 24–25, arginine 63, 90–93, lysine 101, and 117–118 contribute to the substrate site; these read RHGESEWN, TG, ERHY, and RR. Histidine 12 functions as the Tele-phosphohistidine intermediate in the catalytic mechanism. The Proton donor/acceptor role is filled by glutamate 90. Residues 119–138 are disordered; the sequence is SYDTPPPPIERGSTYSQDAD. 184 to 185 is a binding site for substrate; that stretch reads GN.

Belongs to the phosphoglycerate mutase family. BPG-dependent PGAM subfamily.

The catalysed reaction is (2R)-2-phosphoglycerate = (2R)-3-phosphoglycerate. It functions in the pathway carbohydrate degradation; glycolysis; pyruvate from D-glyceraldehyde 3-phosphate: step 3/5. Its function is as follows. Catalyzes the interconversion of 2-phosphoglycerate and 3-phosphoglycerate. This chain is 2,3-bisphosphoglycerate-dependent phosphoglycerate mutase, found in Mycolicibacterium paratuberculosis (strain ATCC BAA-968 / K-10) (Mycobacterium paratuberculosis).